A 283-amino-acid chain; its full sequence is Non-selective voltage-gated ion channel VDAC1 (283 aa).

N-acetylalanine is present on A2. Residue K12 coordinates ATP. K12 is covalently cross-linked (Glycyl lysine isopeptide (Lys-Gly) (interchain with G-Cter in ubiquitin)). S13 bears the Phosphoserine mark. T19 carries the phosphothreonine modification. ATP is bound at residue K20. K20 is subject to N6-acetyllysine; alternate. K20 is modified (N6-succinyllysine; alternate). K20 participates in a covalent cross-link: Glycyl lysine isopeptide (Lys-Gly) (interchain with G-Cter in ubiquitin); alternate. The next 2 membrane-spanning stretches (beta stranded) occupy residues 26–35 (LIKLDLKTKS) and 39–47 (LEFTSSGSA). Glycyl lysine isopeptide (Lys-Gly) (interchain with G-Cter in ubiquitin) cross-links involve residues K53 and K61. The beta stranded transmembrane segment at 54-64 (VTGSLETKYRW) threads the bilayer. Y67 is modified (phosphotyrosine). A run of 3 beta stranded transmembrane segments spans residues 69 to 76 (LTFTEKWN), 80 to 89 (TLGTEITVED), and 95 to 104 (LKLTFDSSFS). T107 is modified (phosphothreonine). K109 carries the post-translational modification N6-acetyllysine; alternate. Residue K109 forms a Glycyl lysine isopeptide (Lys-Gly) (interchain with G-Cter in ubiquitin); alternate linkage. A Glycyl lysine isopeptide (Lys-Gly) (interchain with G-Cter in ubiquitin) cross-link involves residue K110. Beta stranded transmembrane passes span 111 to 120 (NAKIKTGYKR), 123 to 130 (INLGCDMD), 137 to 145 (SIRGALVLG), and 150 to 158 (LAGYQMNFE). Residue K161 forms a Glycyl lysine isopeptide (Lys-Gly) (interchain with G-Cter in ubiquitin) linkage. Beta stranded transmembrane passes span 163–175 (RVTQSNFAVGYKT), 178–185 (FQLHTNVN), 189–198 (EFGGSIYQKV), 202–211 (LETAVNLAWT), 218–227 (RFGIAAKYQI), and 231–238 (ACFSAKVN). S193 carries the phosphoserine; by NEK1 modification. S240 is modified (phosphoserine). Residue 242 to 244 (LIG) coordinates NAD(+). A beta stranded membrane pass occupies residues 242–251 (LIGLGYTQTL). K252 bears the N6-acetyllysine mark. A beta stranded transmembrane segment spans residues 254–263 (GIKLTLSALL). Residue 260-264 (SALLD) participates in NAD(+) binding. K266 carries the post-translational modification N6-acetyllysine; alternate. K266 is covalently cross-linked (Glycyl lysine isopeptide (Lys-Gly) (interchain with G-Cter in ubiquitin); alternate). The chain crosses the membrane as a beta stranded span at residues 273–282 (HKLGLGLEFQ). K274 is covalently cross-linked (Glycyl lysine isopeptide (Lys-Gly) (interchain with G-Cter in ubiquitin)).

Belongs to the eukaryotic mitochondrial porin family. Homodimer and homotrimer; in response to cyclic AMP or calcium; oligomerization is required for scramblase activity. Component of the mitochondrial permeability transition pore complex (mPTPC), at least composed of SPG7, VDAC1 and PPIF. Interacts with SPG7, NIPSNAP2 and SLC25A30. Interacts with hexokinases including HK1. The HK1-VDAC1 complex interacts with ATF2. Interacts with BCL2L1. Interacts with BAK1. Interacts with RTL10/BOP (via BH3 domain). Interacts with amyloid-beta and APP; induces VDAC1 dephosphorylation. Interacts with TMEM41B. Interacts with BCAP31. Interacts with HSPA9; this interaction couples ITPR1 to VDAC1. In terms of assembly, (Microbial infection) Interacts with influenza A virus PB1-F2 protein. Post-translationally, phosphorylation at Ser-193 by NEK1 promotes the closed conformational state preventing excessive mitochondrial membrane permeability and subsequent apoptotic cell death after injury. Phosphorylation by the AKT-GSK3B axis stabilizes the protein probably by preventing ubiquitin-mediated proteasomal degradation. Ubiquitinated. Undergoes monoubiquitination and polyubiquitination by PRKN; monoubiquitination at Lys-274 inhibits apoptosis, whereas polyubiquitination leads to its degradation and promotes mitophagy. Deubiquitinated by USP30. Expressed in erythrocytes (at protein level). Expressed in heart, liver and skeletal muscle.

Its subcellular location is the mitochondrion outer membrane. The protein resides in the cell membrane. It is found in the membrane raft. It carries out the reaction chloride(in) = chloride(out). The catalysed reaction is K(+)(in) = K(+)(out). It catalyses the reaction ATP(in) = ATP(out). The enzyme catalyses Ca(2+)(in) = Ca(2+)(out). It carries out the reaction Na(+)(in) = Na(+)(out). The catalysed reaction is Mg(2+)(in) = Mg(2+)(out). It catalyses the reaction L-glutamate(out) = L-glutamate(in). The enzyme catalyses dopamine(out) = dopamine(in). It carries out the reaction acetylcholine(in) = acetylcholine(out). The catalysed reaction is Fe(III)-[cytochrome c](out) = Fe(III)-[cytochrome c](in). It catalyses the reaction a 1,2-diacyl-sn-glycero-3-phosphocholine(in) = a 1,2-diacyl-sn-glycero-3-phosphocholine(out). The enzyme catalyses a 1,2-diacyl-sn-glycero-3-phospho-L-serine(in) = a 1,2-diacyl-sn-glycero-3-phospho-L-serine(out). Its activity is regulated as follows. Inhibited by nitric oxide. Non-selective voltage-gated ion channel that mediates the transport of anions and cations through the mitochondrion outer membrane and plasma membrane. The channel at the outer mitochondrial membrane allows diffusion of small hydrophilic molecules; in the plasma membrane it is involved in cell volume regulation and apoptosis. It adopts an open conformation at low or zero membrane potential and a closed conformation at potentials above 30-40 mV. The open state has a weak anion selectivity whereas the closed state is cation-selective. Binds various signaling molecules, including the sphingolipid ceramide, the phospholipid phosphatidylcholine, and the sterols cholesterol and oxysterol. In depolarized mitochondria, acts downstream of PRKN and PINK1 to promote mitophagy or prevent apoptosis; polyubiquitination by PRKN promotes mitophagy, while monoubiquitination by PRKN decreases mitochondrial calcium influx which ultimately inhibits apoptosis. May participate in the formation of the permeability transition pore complex (PTPC) responsible for the release of mitochondrial products that triggers apoptosis. May mediate ATP export from cells. Part of a complex composed of HSPA9, ITPR1 and VDAC1 that regulates mitochondrial calcium-dependent apoptosis by facilitating calcium transport from the ER lumen to the mitochondria intermembrane space thus providing calcium for the downstream calcium channel MCU that directly releases it into mitochondria matrix. Mediates cytochrome c efflux. In terms of biological role, catalyzes the scrambling of phospholipids across the outer mitochondrial membrane; the mechanism is unrelated to channel activity and is capable of translocating both anionic and zwitterionic phospholipids. The chain is Non-selective voltage-gated ion channel VDAC1 from Homo sapiens (Human).